We begin with the raw amino-acid sequence, 342 residues long: Leucine-rich repeat-containing protein 23 (342 aa).

A compositionally biased stretch (acidic residues) spans 1–30 (MSDEDDLEDFETDQDDLEREDDEKETEEWE). Residues 1-42 (MSDEDDLEDFETDQDDLEREDDEKETEEWEDYRKEGEESEDW) form a disordered region. A coiled-coil region spans residues 3 to 27 (DEDDLEDFETDQDDLEREDDEKETE). LRR repeat units follow at residues 91–112 (HLRY…NHLT), 113–133 (NLLW…NELP), 134–154 (YLQI…ISHP), 155–176 (RLAS…DPQK), 179–199 (SLHT…INLP), 200–221 (KLKN…ENLS), 222–243 (NLTT…SKEM), and 245–266 (SLQY…AKLR). An interaction with RSPH9 region spans residues 207–342 (AQNMLKKVEG…PESELDQSST (136 aa)). The LRRCT domain maps to 279-317 (NPCTDENDYRQEALVQIAHLERLDKEFYEEEERAEADEI). Residues 306–332 (YEEEERAEADEIRQRMKEEQEQEAEVE) adopt a coiled-coil conformation. The segment at 307–342 (EEEERAEADEIRQRMKEEQEQEAEVEPESELDQSST) is disordered. Residues 314–324 (ADEIRQRMKEE) show a composition bias toward basic and acidic residues. The span at 325–342 (QEQEAEVEPESELDQSST) shows a compositional bias: acidic residues.

Component of the axonemal radial spoke complex. Interacts with RSPH3. Interacts with RSPH9.

It is found in the cytoplasm. It localises to the cytoskeleton. The protein localises to the flagellum axoneme. In terms of biological role, essential for sperm motility and male fertility. Plays an important role in the proper assembly of the third radial spoke (RS3) head and the bridge structure between RS2 and RS3 in the sperm flagella. The protein is Leucine-rich repeat-containing protein 23 (LRRC23) of Bos taurus (Bovine).